A 421-amino-acid polypeptide reads, in one-letter code: Polymerase delta-interacting protein 3 (421 aa).

N-acetylalanine is present on Ala2. A Phosphoserine modification is found at Ser5. Arg33 carries the post-translational modification Omega-N-methylarginine. Ser44 and Ser127 each carry phosphoserine. Thr140 carries the phosphothreonine modification. A Glycyl lysine isopeptide (Lys-Gly) (interchain with G-Cter in SUMO2) cross-link involves residue Lys200. 3 positions are modified to phosphoserine: Ser204, Ser215, and Ser217. Lys223 participates in a covalent cross-link: Glycyl lysine isopeptide (Lys-Gly) (interchain with G-Cter in SUMO2). Residue Ser244 is modified to Phosphoserine. A Glycyl lysine isopeptide (Lys-Gly) (interchain with G-Cter in SUMO2) cross-link involves residue Lys248. Ser275 is subject to Phosphoserine. Residues 280–351 (TKMTVNNLHP…QPMKCNLHMN (72 aa)) form the RRM domain. Basic and acidic residues predominate over residues 370 to 379 (SMKKESELPR). The segment at 370–393 (SMKKESELPRRVNSASSSNPPAEV) is disordered. Residue Lys372 forms a Glycyl lysine isopeptide (Lys-Gly) (interchain with G-Cter in SUMO2) linkage. Residues Ser383 and Ser385 each carry the phosphoserine; by RPS6KB1 modification. Lys418 participates in a covalent cross-link: Glycyl lysine isopeptide (Lys-Gly) (interchain with G-Cter in SUMO2).

As to quaternary structure, interacts with POLD2. Interacts with NCBP1 and EIF4A3. Associates with the multiprotein exon junction complex (EJC). Interacts with RPS6KB1 (activated). Interacts with ERH. Interacts with THOC2, DDX39B and ZC3H11A; the interactions are ATP-dependent and indicative for an association with the TREX complex. Phosphorylated at Ser-383 and Ser-385 by RPS6KB1.

It is found in the nucleus. The protein localises to the nucleus speckle. The protein resides in the cytoplasm. Its function is as follows. Is involved in regulation of translation. Is preferentially associated with CBC-bound spliced mRNA-protein complexes during the pioneer round of mRNA translation. Contributes to enhanced translational efficiency of spliced over nonspliced mRNAs. Recruits activated ribosomal protein S6 kinase beta-1 I/RPS6KB1 to newly synthesized mRNA. Involved in nuclear mRNA export; probably mediated by association with the TREX complex. The polypeptide is Polymerase delta-interacting protein 3 (POLDIP3) (Homo sapiens (Human)).